Consider the following 435-residue polypeptide: Cytidine monophosphate-N-acetylneuraminic acid hydroxylase (435 aa).

The protein belongs to the CMP-Neu5Ac hydroxylase family. [2Fe-2S] cluster serves as cofactor.

The protein resides in the cytoplasm. It catalyses the reaction CMP-N-acetyl-beta-neuraminate + 2 Fe(II)-[cytochrome b5] + O2 + 2 H(+) = CMP-N-glycoloyl-beta-neuraminate + 2 Fe(III)-[cytochrome b5] + H2O. The protein operates within amino-sugar metabolism; N-acetylneuraminate metabolism. Functionally, sialic acids are components of carbohydrate chains of glycoconjugates and are involved in cell-cell recognition and cell-pathogen interactions. Catalyzes the conversion of CMP-N-acetylneuraminic acid (CMP-Neu5Ac) into its hydroxylated derivative CMP-N-glycolylneuraminic acid (CMP-Neu5Gc), a sialic acid abundantly expressed at the surface of many cells. The protein is Cytidine monophosphate-N-acetylneuraminic acid hydroxylase of Sus scrofa (Pig).